A 195-amino-acid polypeptide reads, in one-letter code: Nicotinamide riboside kinase 1 (195 aa).

An ATP-binding site is contributed by 10–18 (GVTNGGKTT). T17 and D36 together coordinate Mg(2+). Residue D36 is the Proton acceptor of the active site. Residues 36 to 39 (DDFF) and 55 to 56 (YD) contribute to the substrate site. R128 serves as a coordination point for ATP. Substrate is bound by residues R129 and 134–135 (YE). ATP contacts are provided by residues 132-134 (RVY) and 172-174 (RSE).

This sequence belongs to the uridine kinase family. NRK subfamily. In terms of assembly, monomer.

It carries out the reaction beta-nicotinamide D-riboside + ATP = beta-nicotinamide D-ribonucleotide + ADP + H(+). It catalyses the reaction beta-D-ribosylnicotinate + ATP = nicotinate beta-D-ribonucleotide + ADP + H(+). It functions in the pathway cofactor biosynthesis; NAD(+) biosynthesis. In terms of biological role, catalyzes the phosphorylation of nicotinamide riboside (NR) and nicotinic acid riboside (NaR) to form nicotinamide mononucleotide (NMN) and nicotinic acid mononucleotide (NaMN). In Rattus norvegicus (Rat), this protein is Nicotinamide riboside kinase 1 (Nmrk1).